Reading from the N-terminus, the 56-residue chain is Male-specific sperm protein Mst87F (56 aa).

It belongs to the MST(3)CGP family. Testis.

This Drosophila melanogaster (Fruit fly) protein is Male-specific sperm protein Mst87F (Mst87F).